Consider the following 737-residue polypeptide: Polyribonucleotide nucleotidyltransferase (737 aa).

D489 and D495 together coordinate Mg(2+). Residues 556–615 form the KH domain; it reads PKIDTIKIDVDKIKIVIGKGGETIDKIIAETGVKIDIDEEGNVSIYSSDQDAINRAKEII. One can recognise an S1 motif domain in the interval 625–693; sequence DEVYRAKVVR…EKGRIDASMK (69 aa). Residues 691 to 737 are disordered; sequence SMKALLPRPPKPEHDEKGEKSERPHRPRHQKDYKPKKEFTETPKDSE. Over residues 700 to 737 the composition is skewed to basic and acidic residues; it reads PKPEHDEKGEKSERPHRPRHQKDYKPKKEFTETPKDSE.

The protein belongs to the polyribonucleotide nucleotidyltransferase family. Requires Mg(2+) as cofactor.

It is found in the cytoplasm. It catalyses the reaction RNA(n+1) + phosphate = RNA(n) + a ribonucleoside 5'-diphosphate. Its function is as follows. Involved in mRNA degradation. Catalyzes the phosphorolysis of single-stranded polyribonucleotides processively in the 3'- to 5'-direction. This is Polyribonucleotide nucleotidyltransferase from Streptococcus pneumoniae serotype 2 (strain D39 / NCTC 7466).